A 44-amino-acid chain; its full sequence is Photosystem I reaction center subunit IX (44 aa).

The helical transmembrane segment at 7–27 threads the bilayer; sequence YLSTVPVLTTLWFGSLAGLLI.

The protein belongs to the PsaJ family.

It localises to the plastid. It is found in the chloroplast thylakoid membrane. Its function is as follows. May help in the organization of the PsaE and PsaF subunits. In Dioscorea elephantipes (Elephant's foot yam), this protein is Photosystem I reaction center subunit IX.